Consider the following 503-residue polypeptide: Probable cytosol aminopeptidase (503 aa).

Mn(2+) contacts are provided by K274 and D279. The active site involves K286. 3 residues coordinate Mn(2+): D297, D356, and E358. The active site involves R360.

The protein belongs to the peptidase M17 family. It depends on Mn(2+) as a cofactor.

It localises to the cytoplasm. The enzyme catalyses Release of an N-terminal amino acid, Xaa-|-Yaa-, in which Xaa is preferably Leu, but may be other amino acids including Pro although not Arg or Lys, and Yaa may be Pro. Amino acid amides and methyl esters are also readily hydrolyzed, but rates on arylamides are exceedingly low.. It carries out the reaction Release of an N-terminal amino acid, preferentially leucine, but not glutamic or aspartic acids.. Functionally, presumably involved in the processing and regular turnover of intracellular proteins. Catalyzes the removal of unsubstituted N-terminal amino acids from various peptides. The chain is Probable cytosol aminopeptidase from Burkholderia pseudomallei (strain 1106a).